Reading from the N-terminus, the 410-residue chain is MSGFCVLAKYGEIAVKGRNQGWFENCLVRNLRHAVGGPVLIRRRGGFLVASAHHRDPAELTRRLQEVMGLNVVQPALSVPPTVEDATAAAVDLLRRRHAERPGAPVPTFAVRARRRWKDFPMSSDAFAAHIGARVCAELGWRVDLAAPEVPVLVEVDRREIFVSVERLPGQGGLPVGCSGRALVLLSGGYDSPVAAYRAMRRGLHCDFVHFTGAPYTDPSSMYKAYALARELGRYQTPARLYVVPVGNAQKTLATAGAEELQIVARRRLYLRIAEELARRRQRDALVTGDSLGQVASQTLSNLVSADQACTLPVLRPLIGWDKQEIITEARRIGTAEISVLRDEDCCSLLAPSEVATRTNPADLRVIEQRADIDTLVEQALEHVTVLTPGRVRGAEPPRAKVARPTVVAG.

Residues 58–167 (AELTRRLQEV…RREIFVSVER (110 aa)) enclose the THUMP domain. Residues 185–186 (LL), 210–211 (HF), Arg267, Gly289, and Gln298 contribute to the ATP site.

It belongs to the ThiI family.

The protein localises to the cytoplasm. The enzyme catalyses [ThiI sulfur-carrier protein]-S-sulfanyl-L-cysteine + a uridine in tRNA + 2 reduced [2Fe-2S]-[ferredoxin] + ATP + H(+) = [ThiI sulfur-carrier protein]-L-cysteine + a 4-thiouridine in tRNA + 2 oxidized [2Fe-2S]-[ferredoxin] + AMP + diphosphate. It catalyses the reaction [ThiS sulfur-carrier protein]-C-terminal Gly-Gly-AMP + S-sulfanyl-L-cysteinyl-[cysteine desulfurase] + AH2 = [ThiS sulfur-carrier protein]-C-terminal-Gly-aminoethanethioate + L-cysteinyl-[cysteine desulfurase] + A + AMP + 2 H(+). The protein operates within cofactor biosynthesis; thiamine diphosphate biosynthesis. Functionally, catalyzes the ATP-dependent transfer of a sulfur to tRNA to produce 4-thiouridine in position 8 of tRNAs, which functions as a near-UV photosensor. Also catalyzes the transfer of sulfur to the sulfur carrier protein ThiS, forming ThiS-thiocarboxylate. This is a step in the synthesis of thiazole, in the thiamine biosynthesis pathway. The sulfur is donated as persulfide by IscS. The polypeptide is Probable tRNA sulfurtransferase (Nocardia farcinica (strain IFM 10152)).